Consider the following 340-residue polypeptide: Ketol-acid reductoisomerase (NADP(+)) (340 aa).

In terms of domain architecture, KARI N-terminal Rossmann spans 2–182 (AELYYDNQAD…GCTRAGVLRT (181 aa)). NADP(+)-binding positions include 25–28 (FGSQ), Ser51, Ser53, and 83–86 (DIGQ). His108 is an active-site residue. Residue Gly134 coordinates NADP(+). Residues 183 to 328 (TFAEETETDL…RELRRMMPFV (146 aa)) form the KARI C-terminal knotted domain. Mg(2+) contacts are provided by Asp191, Glu195, Glu227, and Glu231. Ser252 contributes to the substrate binding site.

It belongs to the ketol-acid reductoisomerase family. Mg(2+) serves as cofactor.

It catalyses the reaction (2R)-2,3-dihydroxy-3-methylbutanoate + NADP(+) = (2S)-2-acetolactate + NADPH + H(+). The catalysed reaction is (2R,3R)-2,3-dihydroxy-3-methylpentanoate + NADP(+) = (S)-2-ethyl-2-hydroxy-3-oxobutanoate + NADPH + H(+). The protein operates within amino-acid biosynthesis; L-isoleucine biosynthesis; L-isoleucine from 2-oxobutanoate: step 2/4. It functions in the pathway amino-acid biosynthesis; L-valine biosynthesis; L-valine from pyruvate: step 2/4. In terms of biological role, involved in the biosynthesis of branched-chain amino acids (BCAA). Catalyzes an alkyl-migration followed by a ketol-acid reduction of (S)-2-acetolactate (S2AL) to yield (R)-2,3-dihydroxy-isovalerate. In the isomerase reaction, S2AL is rearranged via a Mg-dependent methyl migration to produce 3-hydroxy-3-methyl-2-ketobutyrate (HMKB). In the reductase reaction, this 2-ketoacid undergoes a metal-dependent reduction by NADPH to yield (R)-2,3-dihydroxy-isovalerate. The chain is Ketol-acid reductoisomerase (NADP(+)) from Chloroflexus aurantiacus (strain ATCC 29366 / DSM 635 / J-10-fl).